The chain runs to 502 residues: ATP synthase subunit alpha (502 aa).

169–176 (GDRQTGKT) contacts ATP.

It belongs to the ATPase alpha/beta chains family. In terms of assembly, F-type ATPases have 2 components, CF(1) - the catalytic core - and CF(0) - the membrane proton channel. CF(1) has five subunits: alpha(3), beta(3), gamma(1), delta(1), epsilon(1). CF(0) has three main subunits: a(1), b(2) and c(9-12). The alpha and beta chains form an alternating ring which encloses part of the gamma chain. CF(1) is attached to CF(0) by a central stalk formed by the gamma and epsilon chains, while a peripheral stalk is formed by the delta and b chains.

Its subcellular location is the cell membrane. The catalysed reaction is ATP + H2O + 4 H(+)(in) = ADP + phosphate + 5 H(+)(out). Its function is as follows. Produces ATP from ADP in the presence of a proton gradient across the membrane. The alpha chain is a regulatory subunit. The protein is ATP synthase subunit alpha of Exiguobacterium sp. (strain ATCC BAA-1283 / AT1b).